The sequence spans 114 residues: Early 4 ORF4 protein (114 aa).

Residues 66-75 carry the Nuclear localization signal motif; that stretch reads RAKRRDRRRR.

It belongs to the adenoviridae E4 ORF4 family. In terms of assembly, interacts with host BAZ1A/ACF1, host PPP2R2A/PP2a-B55alpha subunit, and host PPP2R5E/PP2a-B'B56 subunit. May interact with host SRC. In terms of processing, may be phosphorylated by host SRC kinase.

It localises to the host nucleus. The protein localises to the host cytoplasm. Plays a role in viral alternative pre-mRNA splicing. Activates dephosphorylation by protein phosphatase 2A of host SR proteins and converts their splicing properties. When expressed alone ex vivo, induces p53/TP53-independent apoptosis called cytoplasmic death. May mimic nutrient/growth signals to activate the host mTOR pathway. This chain is Early 4 ORF4 protein, found in Homo sapiens (Human).